The chain runs to 252 residues: Mannose-P-dolichol utilization defect 1 protein homolog (252 aa).

The region spanning K34–D100 is the PQ-loop 1 domain. Helical transmembrane passes span L41–L61, I69–F89, W98–F118, G126–M146, V148–A168, L180–I200, and M207–I227. The 55-residue stretch at I157 to T211 folds into the PQ-loop 2 domain.

This sequence belongs to the MPDU1 (TC 2.A.43.3) family.

Its subcellular location is the membrane. The sequence is that of Mannose-P-dolichol utilization defect 1 protein homolog from Drosophila melanogaster (Fruit fly).